The following is a 302-amino-acid chain: GTPase Era (302 aa).

Residues 4–171 (KAGFVALVGR…KEKIVSLLPE (168 aa)) enclose the Era-type G domain. Positions 12 to 19 (GRTNVGKS) are G1. 12–19 (GRTNVGKS) provides a ligand contact to GTP. The tract at residues 38-42 (QTTRN) is G2. The segment at 59–62 (DTPG) is G3. GTP contacts are provided by residues 59 to 63 (DTPGI) and 121 to 124 (NKID). The segment at 121 to 124 (NKID) is G4. Residues 150–152 (ISA) are G5. Residues 202 to 280 (LEEEVPHGVY…FLDLWVKTRK (79 aa)) enclose the KH type-2 domain.

This sequence belongs to the TRAFAC class TrmE-Era-EngA-EngB-Septin-like GTPase superfamily. Era GTPase family. As to quaternary structure, monomer.

The protein resides in the cytoplasm. Its subcellular location is the cell membrane. An essential GTPase that binds both GDP and GTP, with rapid nucleotide exchange. Plays a role in 16S rRNA processing and 30S ribosomal subunit biogenesis and possibly also in cell cycle regulation and energy metabolism. The polypeptide is GTPase Era (Thermoanaerobacter pseudethanolicus (strain ATCC 33223 / 39E) (Clostridium thermohydrosulfuricum)).